We begin with the raw amino-acid sequence, 382 residues long: Mannosyl phosphorylinositol ceramide synthase SUR1 (382 aa).

At 1–6 (MRKELK) the chain is on the cytoplasmic side. The chain crosses the membrane as a helical span at residues 7–27 (YLICFNILLLLSIIYYTFDLL). Over 28–269 (TLCIDDTVKD…KALENHILSC (242 aa)) the chain is Extracellular. A helical membrane pass occupies residues 270–290 (VVTGFIFGFFILYGEFTFYCW). The Cytoplasmic portion of the chain corresponds to 291 to 382 (LCSKNFSNLT…SKYSLGNNSS (92 aa)). Phosphoserine is present on Ser349.

It belongs to the glycosyltransferase 32 family. Heterodimer of SUR1 and CSG2.

It localises to the membrane. It carries out the reaction a 1D-myo-inositol-1-phospho-N-[(R)-2-hydroxy-very-long-chain fatty acyl]-(R)-4-hydroxysphingoid base + GDP-alpha-D-mannose = an alpha-D-mannosyl-(1&lt;-&gt;6)-1D-myo-inositol-1-phospho-N-[(R)-2-hydroxy-very-long-chain fatty acyl]-(R)-4-hydroxysphingoid base + GDP + H(+). Involved in the synthesis of mannosyl phosphorylinositol ceramide. Catalyzes the addition of mannosyl to phosphorylinositol ceramide. Suppressor of RVS161 mutation. This Saccharomyces cerevisiae (strain ATCC 204508 / S288c) (Baker's yeast) protein is Mannosyl phosphorylinositol ceramide synthase SUR1.